The primary structure comprises 548 residues: Glycosyl hydrolase family 109 protein 3 (548 aa).

The N-terminal stretch at 1–21 (MKLKKLLLSVLMLLSISGLQA) is a signal peptide. Residues 71-72 (MR), aspartate 93, 141-144 (WNHH), 161-162 (EV), and asparagine 190 each bind NAD(+). Tyrosine 219 lines the substrate pocket. NAD(+) is bound at residue 240–244 (DNLHW). Substrate is bound by residues arginine 245, 257-260 (YATH), and tyrosine 335. Tyrosine 257 contacts NAD(+).

The protein belongs to the Gfo/Idh/MocA family. Glycosyl hydrolase 109 subfamily. The cofactor is NAD(+).

Glycosidase. This is Glycosyl hydrolase family 109 protein 3 from Phocaeicola vulgatus (strain ATCC 8482 / DSM 1447 / JCM 5826 / CCUG 4940 / NBRC 14291 / NCTC 11154) (Bacteroides vulgatus).